The primary structure comprises 232 residues: Small ribosomal subunit protein uS2 (232 aa).

This sequence belongs to the universal ribosomal protein uS2 family.

This is Small ribosomal subunit protein uS2 from Baumannia cicadellinicola subsp. Homalodisca coagulata.